We begin with the raw amino-acid sequence, 567 residues long: Proline--tRNA ligase (567 aa).

It belongs to the class-II aminoacyl-tRNA synthetase family. ProS type 1 subfamily. In terms of assembly, homodimer.

Its subcellular location is the cytoplasm. The enzyme catalyses tRNA(Pro) + L-proline + ATP = L-prolyl-tRNA(Pro) + AMP + diphosphate. Catalyzes the attachment of proline to tRNA(Pro) in a two-step reaction: proline is first activated by ATP to form Pro-AMP and then transferred to the acceptor end of tRNA(Pro). As ProRS can inadvertently accommodate and process non-cognate amino acids such as alanine and cysteine, to avoid such errors it has two additional distinct editing activities against alanine. One activity is designated as 'pretransfer' editing and involves the tRNA(Pro)-independent hydrolysis of activated Ala-AMP. The other activity is designated 'posttransfer' editing and involves deacylation of mischarged Ala-tRNA(Pro). The misacylated Cys-tRNA(Pro) is not edited by ProRS. The chain is Proline--tRNA ligase from Staphylococcus aureus (strain bovine RF122 / ET3-1).